Reading from the N-terminus, the 188-residue chain is Peptidyl-tRNA hydrolase (188 aa).

Phe-15 provides a ligand contact to tRNA. Catalysis depends on His-20, which acts as the Proton acceptor. 3 residues coordinate tRNA: Tyr-64, Asn-66, and Asn-112.

It belongs to the PTH family. Monomer.

The protein localises to the cytoplasm. It carries out the reaction an N-acyl-L-alpha-aminoacyl-tRNA + H2O = an N-acyl-L-amino acid + a tRNA + H(+). Functionally, hydrolyzes ribosome-free peptidyl-tRNAs (with 1 or more amino acids incorporated), which drop off the ribosome during protein synthesis, or as a result of ribosome stalling. In terms of biological role, catalyzes the release of premature peptidyl moieties from peptidyl-tRNA molecules trapped in stalled 50S ribosomal subunits, and thus maintains levels of free tRNAs and 50S ribosomes. The polypeptide is Peptidyl-tRNA hydrolase (Borrelia recurrentis (strain A1)).